The sequence spans 270 residues: Sorting nexin-11 (270 aa).

Positions 16–132 (VITVRVQDPR…HLFLQSQLSV (117 aa)) constitute a PX domain. A 1,2-diacyl-sn-glycero-3-phospho-(1D-myo-inositol-3-phosphate)-binding residues include Arg-59, Lys-85, and Arg-99. Residues 135–139 (IEACV) form an important for membrane trafficking region. A compositionally biased stretch (basic and acidic residues) spans 168–177 (GSSHLAEGDQ). Disordered regions lie at residues 168-244 (GSSH…LSAS) and 251-270 (LGGGHAVPLDPGQLETVLEK). The segment covering 218–227 (LESPTLPPTS) has biased composition (pro residues).

Belongs to the sorting nexin family. Monomer. Interacts with TRPV3; this interaction promotes TRPV3 trafficking from the cell membrane to lysosome for degradation.

It localises to the cell membrane. It is found in the endosome. The protein resides in the cytoplasm. Its function is as follows. Phosphoinositide-binding protein involved in protein sorting and membrane trafficking in endosomes. Regulates the levels of TRPV3 by promoting its trafficking from the cell membrane to lysosome for degradation. In Bos taurus (Bovine), this protein is Sorting nexin-11 (SNX11).